The primary structure comprises 1781 residues: Atrochrysone carboxylic acid synthase (1781 aa).

The N-terminal acylcarrier protein transacylase domain (SAT) stretch occupies residues 15-253; sequence TRDLFRRLHV…KHVALPVYAG (239 aa). Residues 390 to 823 enclose the Ketosynthase family 3 (KS3) domain; that stretch reads QSKIAIVGMA…GGNTSVVVEE (434 aa). Active-site for beta-ketoacyl synthase activity residues include Cys563, His698, and His741. The interval 925-1244 is malonyl-CoA:ACP transacylase (MAT) domain; it reads FAFTGQGASH…SLGLLHCAGL (320 aa). Positions 1312-1631 are product template (PT) domain; the sequence is TSTVQQIIEE…RVLLNRFFSA (320 aa). The segment at 1316–1451 is N-terminal hotdog fold; it reads QQIIEETFSD…ADIVYGLPTD (136 aa). The PKS/mFAS DH domain maps to 1316-1626; sequence QQIIEETFSD…FRRYPRVLLN (311 aa). The active-site Proton acceptor; for dehydratase activity is His1348. A C-terminal hotdog fold region spans residues 1478 to 1626; sequence IANRLSHNMA…FRRYPRVLLN (149 aa). Residue Asp1537 is the Proton donor; for dehydratase activity of the active site. A disordered region spans residues 1633–1653; that stretch reads DSDTSKHTSATDVSPPKKVVQ. One can recognise a Carrier domain in the interval 1703-1780; it reads VDSDSTASKA…DLKAWLMEYY (78 aa). The residue at position 1740 (Ser1740) is an O-(pantetheine 4'-phosphoryl)serine.

The catalysed reaction is holo-[ACP] + 8 malonyl-CoA + 8 H(+) = atrochrysone carboxyl-[ACP] + 8 CO2 + 8 CoA + 2 H2O. The protein operates within secondary metabolite biosynthesis. Functionally, atrochrysone carboxylic acid synthase; part of the gene cluster that mediates the biosynthesis of the dimeric xanthones cryptosporioptides. The pathway begins with the synthesis of atrochrysone thioester by the polyketide synthase dmx-nrPKS. The atrochrysone carboxyl ACP thioesterase dmxR1 then breaks the thioester bond and releases the atrochrysone carboxylic acid from dmx-nrPKS. Atrochrysone carboxylic acid is decarboxylated by the decarboxylase dmxR15, and oxidized by the anthrone oxygenase dmxR16 to yield emodin. Emodin is then reduced to emodin hydroquinone by the oxidoreductase dmxR7. A-ring reduction by the short chain dehydrogenase dmxR18, dehydration by the scytalone dehydratase-like protein dmxR17 and probable spontaneous re-oxidation, results in overall deoxygenation to chrysophanol. Baeyer-Villiger oxidation by the Baeyer-Villiger monooxygenase (BVMO) dmxR6 then yields monodictylactone in equilibrium with monodictyphenone. In the case of the cryptosporioptides biosynthesis, monodictylactone is reduced at C-12 to an alcohol (by the short chain dehydrogenases dmxR12 or dmxR8) and hydroxylated at C-5 by dmxR9, yielding the electron-rich aromatic which could eliminate H(2)O to form the ortho-quinonemethide, followed by tautomerisation to paraquinone and complete the formal reduction to produce the 10-methylgroup. Conjugate addition of C-4a-OH to the resulting paraquinone by the monooxygenase dmxR10 then gives cyclohexadienone, which is then reduced at C-5 by the short chain dehydrogenase dmxR3 to give the dihydroxanthone. The 6,7-epoxide in the cryptosporioptides could be introduced by the cytochrome P450 monooxygenase dmxL3. The highly reducing PKS dmxL2 manufactures butyrate, which is further carboxylated by dmxL1 to form ethylmalonate. It is not yet clear whether the carboxylation occurs while the butyrate is attached to the ACP of dmxL2, but this unusual fungal metabolite could then be esterified to O-5 by the O-acetyltransferase dmxR13. Finally, dimerization performed by dmxR5 gives the observed dimers cryptosporioptides A, B and C as the final products of the pathway. The sequence is that of Atrochrysone carboxylic acid synthase from Cryptosporiopsis sp. (strain 8999).